The sequence spans 134 residues: Translation initiation factor 2 subunit beta (134 aa).

Positions 1 to 12 are enriched in basic and acidic residues; it reads MGYEEQLDRALE. The segment at 1-32 is disordered; it reads MGYEEQLDRALEETPDIEGTAARFSVPDPDVR.

It belongs to the eIF-2-beta/eIF-5 family. Heterotrimer composed of an alpha, a beta and a gamma chain.

EIF-2 functions in the early steps of protein synthesis by forming a ternary complex with GTP and initiator tRNA. The chain is Translation initiation factor 2 subunit beta from Natronomonas pharaonis (strain ATCC 35678 / DSM 2160 / CIP 103997 / JCM 8858 / NBRC 14720 / NCIMB 2260 / Gabara) (Halobacterium pharaonis).